The chain runs to 1140 residues: uncharacterized protein (1140 aa).

2 consecutive transmembrane segments (helical) span residues 8-28 (FLLFGFALGSFGWFVASSAFT) and 1098-1118 (IAITFTGSAALLSTIIASGVV).

This sequence to M.pneumoniae MPN_375 (in the N-terminal section), M.pneumoniae MPN_374 (in the central section) and M.pneumoniae MPN_373 (in the C-terminal section).

Its subcellular location is the cell membrane. This is an uncharacterized protein from Mycoplasma pneumoniae (strain ATCC 29342 / M129 / Subtype 1) (Mycoplasmoides pneumoniae).